A 1308-amino-acid chain; its full sequence is Transposon TX1 uncharacterized 149 kDa protein (1308 aa).

In terms of domain architecture, Reverse transcriptase spans 494 to 765; the sequence is EAFKKGELPL…KIIKYLGVYL (272 aa).

The protein is Transposon TX1 uncharacterized 149 kDa protein of Xenopus laevis (African clawed frog).